We begin with the raw amino-acid sequence, 404 residues long: Indole-3-acetate O-methyltransferase 1 (404 aa).

S-adenosyl-L-methionine is bound by residues glycine 82–cysteine 83, asparagine 88, aspartate 120, threonine 169–tyrosine 171, and threonine 186–serine 188. Asparagine 208, valine 212, arginine 294, aspartate 295, phenylalanine 297, and asparagine 298 together coordinate Mg(2+).

Belongs to the methyltransferase superfamily. SABATH family. As to quaternary structure, homodimer. Mg(2+) serves as cofactor. As to expression, expressed in roots and panicles.

It carries out the reaction (indol-3-yl)acetate + S-adenosyl-L-methionine = methyl (indol-3-yl)acetate + S-adenosyl-L-homocysteine. Its function is as follows. Catalyzes the methylation of the free carboxyl end of the plant hormone indole-3-acetic acid (IAA). Converts IAA to IAA methyl ester (MeIAA). Regulates IAA activities by IAA methylation. Methylation of IAA plays an important role in regulating plant development and auxin homeostasis. MeIAA seems to be an inactive form of IAA. The sequence is that of Indole-3-acetate O-methyltransferase 1 (IAMT1) from Oryza sativa subsp. japonica (Rice).